The sequence spans 239 residues: Small ribosomal subunit protein uS2c (239 aa).

This sequence belongs to the universal ribosomal protein uS2 family.

The protein localises to the plastid. The protein resides in the organellar chromatophore. The sequence is that of Small ribosomal subunit protein uS2c (rps2) from Paulinella chromatophora.